Reading from the N-terminus, the 570-residue chain is Sulfite reductase [NADPH] hemoprotein beta-component (570 aa).

4 residues coordinate [4Fe-4S] cluster: C434, C440, C479, and C483. Residue C483 coordinates siroheme.

Belongs to the nitrite and sulfite reductase 4Fe-4S domain family. In terms of assembly, alpha(8)-beta(8). The alpha component is a flavoprotein, the beta component is a hemoprotein. The cofactor is siroheme. Requires [4Fe-4S] cluster as cofactor.

The catalysed reaction is hydrogen sulfide + 3 NADP(+) + 3 H2O = sulfite + 3 NADPH + 4 H(+). The protein operates within sulfur metabolism; hydrogen sulfide biosynthesis; hydrogen sulfide from sulfite (NADPH route): step 1/1. Functionally, component of the sulfite reductase complex that catalyzes the 6-electron reduction of sulfite to sulfide. This is one of several activities required for the biosynthesis of L-cysteine from sulfate. This chain is Sulfite reductase [NADPH] hemoprotein beta-component, found in Salmonella typhi.